A 397-amino-acid chain; its full sequence is Acetate kinase (397 aa).

Asn7 lines the Mg(2+) pocket. Lys14 provides a ligand contact to ATP. Arg90 is a substrate binding site. The active-site Proton donor/acceptor is Asp147. Residues 207-211 (HLGNG), 282-284 (DFR), and 330-334 (GLGEN) each bind ATP. Mg(2+) is bound at residue Glu383.

Belongs to the acetokinase family. In terms of assembly, homodimer. It depends on Mg(2+) as a cofactor. Requires Mn(2+) as cofactor.

It localises to the cytoplasm. The enzyme catalyses acetate + ATP = acetyl phosphate + ADP. Its pathway is metabolic intermediate biosynthesis; acetyl-CoA biosynthesis; acetyl-CoA from acetate: step 1/2. In terms of biological role, catalyzes the formation of acetyl phosphate from acetate and ATP. Can also catalyze the reverse reaction. The chain is Acetate kinase from Clostridium botulinum (strain Kyoto / Type A2).